The following is a 397-amino-acid chain: Multidrug efflux pump subunit AcrA (397 aa).

The N-terminal stretch at 1-24 (MNKNRGFTPLAVVLMLSGSLALTG) is a signal peptide. The N-palmitoyl cysteine moiety is linked to residue Cys-25. Residue Cys-25 is the site of S-diacylglycerol cysteine attachment. Residues 98–172 (PATYQATYDS…AVETARINLA (75 aa)) are a coiled coil. The tract at residues 377 to 397 (EVTADNNQQAASGAQPEQSKS) is disordered. The span at 379–397 (TADNNQQAASGAQPEQSKS) shows a compositional bias: polar residues.

This sequence belongs to the membrane fusion protein (MFP) (TC 8.A.1) family. In terms of assembly, monomeric in solution. Homotrimeric; interacts independently with AcrB and TolC as well as AcrZ. Part of the AcrA-AcrB-TolC efflux pump.

It localises to the cell inner membrane. Functionally, acrA-AcrB-AcrZ-TolC is a drug efflux protein complex with broad substrate specificity that uses the proton motive force to export substrates. This subunit may act as an adapter protein that links AcrB and TolC stably together. The chain is Multidrug efflux pump subunit AcrA (acrA) from Escherichia coli O157:H7.